A 610-amino-acid polypeptide reads, in one-letter code: Anthocyanin regulatory Lc protein (610 aa).

2 disordered regions span residues 402 to 422 (ATGAAQEMSGTGTKNHVMSER) and 468 to 524 (LESS…PVLT). The bHLH domain maps to 412-461 (TGTKNHVMSERKRREKLNEMFLVLKSLLPSIHRVNKASILAETIAYLKEL). The segment covering 481 to 495 (TTTRLITRPSRGNNE) has biased composition (polar residues). Residues 508-519 (KSPELGRDDVER) are compositionally biased toward basic and acidic residues.

Belongs to the bHLH protein family. In terms of assembly, efficient DNA binding requires dimerization with another bHLH protein.

The protein localises to the nucleus. Functionally, putative transcriptional activator. Controls tissue-specific synthesis of anthocyanin pigments in various parts of the maize plant. The sequence is that of Anthocyanin regulatory Lc protein (LC) from Zea mays (Maize).